We begin with the raw amino-acid sequence, 272 residues long: Putative phosphoenolpyruvate synthase regulatory protein (272 aa).

Gly-152–Thr-159 is an ADP binding site.

It belongs to the pyruvate, phosphate/water dikinase regulatory protein family. PSRP subfamily.

It catalyses the reaction [pyruvate, water dikinase] + ADP = [pyruvate, water dikinase]-phosphate + AMP + H(+). The enzyme catalyses [pyruvate, water dikinase]-phosphate + phosphate + H(+) = [pyruvate, water dikinase] + diphosphate. In terms of biological role, bifunctional serine/threonine kinase and phosphorylase involved in the regulation of the phosphoenolpyruvate synthase (PEPS) by catalyzing its phosphorylation/dephosphorylation. The polypeptide is Putative phosphoenolpyruvate synthase regulatory protein (Ectopseudomonas mendocina (strain ymp) (Pseudomonas mendocina)).